A 376-amino-acid chain; its full sequence is Respiration factor 1 (376 aa).

4 disordered regions span residues 1–23 (MKDL…DNRG), 88–107 (VNVT…NSTK), 258–279 (FKEK…TGSS), and 347–376 (GVNE…QHTN). Positions 354–376 (NSSNLNNSNSGTPHNHNQNQHTN) are enriched in low complexity.

The protein resides in the cytoplasm. It localises to the nucleus. It is found in the mitochondrion. Its function is as follows. Mitochondrial and nuclear transcriptional activator required for respiratory growth. The chain is Respiration factor 1 (RSF1) from Saccharomyces cerevisiae (strain YJM789) (Baker's yeast).